A 442-amino-acid chain; its full sequence is Septin-8 (442 aa).

A compositionally biased stretch (basic and acidic residues) spans 1-16; the sequence is MAATDLERVSSAEPEP. The disordered stretch occupies residues 1–23; it reads MAATDLERVSSAEPEPRSLSLGG. An N-acetylalanine modification is found at A2. The residue at position 10 (S10) is a Phosphoserine. The Septin-type G domain maps to 41-307; sequence QGFSFNILCV…ELYRRCKLEE (267 aa). The G1 motif stretch occupies residues 51–58; it reads GETGIGKS. GTP-binding positions include 51-58, G106, 187-195, G241, and R256; these read GETGIGKS and KADTISKSE. The G3 motif stretch occupies residues 103–106; the sequence is DAVG. The segment at 186–189 is G4 motif; the sequence is AKAD. A coiled-coil region spans residues 322–410; it reads LQETYEAKRK…RKAAVEALQS (89 aa). Positions 377-391 are enriched in basic and acidic residues; it reads HQEEKRKVEEKRREL. Positions 377-442 are disordered; the sequence is HQEEKRKVEE…WSSIYSVTIP (66 aa). 2 stretches are compositionally biased toward polar residues: residues 408–420 and 432–442; these read LQSQ…SQQP and GWSSIYSVTIP.

The protein belongs to the TRAFAC class TrmE-Era-EngA-EngB-Septin-like GTPase superfamily. Septin GTPase family. As to quaternary structure, septins polymerize into heterooligomeric protein complexes that form filaments, and can associate with cellular membranes, actin filaments and microtubules. GTPase activity is required for filament formation. Interacts with CDK14, SEPTIN4, SEPTIN5 and SEPTIN7. Interacts with VAMP2; the interaction inhibits interaction of VAMP2 with SYP. Interacts with STX1A.

It is found in the cytoplasm. The protein resides in the cytoskeleton. Its subcellular location is the synapse. The protein localises to the cell projection. It localises to the axon. It is found in the cytoplasmic vesicle. The protein resides in the secretory vesicle. Its subcellular location is the synaptic vesicle membrane. The protein localises to the presynapse. Functionally, filament-forming cytoskeletal GTPase. May play a role in platelet secretion. Seems to participate in the process of SNARE complex formation in synaptic vesicles. This is Septin-8 from Otolemur garnettii (Small-eared galago).